Reading from the N-terminus, the 269-residue chain is uncharacterized protein (269 aa).

This sequence to T.pallidum TP0678.

This is an uncharacterized protein from Borreliella burgdorferi (strain ATCC 35210 / DSM 4680 / CIP 102532 / B31) (Borrelia burgdorferi).